The chain runs to 491 residues: Serine/threonine-protein kinase 3 (491 aa).

M1 bears the N-acetylmethionine mark. Residue S15 is modified to Phosphoserine. The Protein kinase domain maps to 27–278 (FDVLEKLGEG…ATQLLQHPFI (252 aa)). Residues 33–41 (LGEGSYGSV) and K56 each bind ATP. T117 is modified (phosphothreonine; by PKB/AKT1). The active-site Proton acceptor is D146. N151 and D164 together coordinate Mg(2+). A Phosphothreonine; by autocatalysis modification is found at T180. Residues 291 to 324 (ITEGMEIKAKRHEEQQRELEDEEENSDEDELDSH) are a coiled coil. Disordered stretches follow at residues 301-343 (RHEE…TSTM) and 370-392 (EDEE…QRPS). The span at 309-321 (LEDEEENSDEDEL) shows a compositional bias: acidic residues. S316 is modified (phosphoserine). Over residues 326 to 343 (MVKTSSEGVGTMRATSTM) the composition is skewed to polar residues. A phosphothreonine mark is found at T336 and T378. The segment covering 381–390 (RNATSPQVQR) has biased composition (polar residues). T384 bears the Phosphothreonine; by PKB/AKT1 mark. Phosphoserine occurs at positions 385 and 444. Residues 437 to 484 (FDFLKNLSLEELQMRLKALDPMMEREIEELHQRYSAKRQPILDAMDAK) form the SARAH domain.

Belongs to the protein kinase superfamily. STE Ser/Thr protein kinase family. STE20 subfamily. Homodimer; mediated via the coiled-coil region. Interacts with NORE1, which inhibits autoactivation. Interacts with and stabilizes SAV1. Interacts with RAF1, which prevents dimerization and phosphorylation. Interacts with RASSF1. Interacts (via SARAH domain) with isoform 1 of NEK2. Interacts with ESR1 only in the presence of SAV1. Interacts with PKB/AKT1. Forms a tripartite complex with MOBKL1B and STK38. Interacts with RASSF2 (via SARAH domain). Interacts with DLG5 (via PDZ domain 3). Interacts with LATS1; this interaction is inhibited in the presence of DLG5. Interacts with MARK3 in the presence of DLG5. Interacts with RASSF5; this interaction inhibits STK3 autoactivation through heterodimerization. Interacts (when phosphorylated) with SLMAP (via FHA domain); the interaction associates STK3 with the STRIPAK complex. Mg(2+) is required as a cofactor. Post-translationally, autophosphorylated on two residues Thr-174 and Thr-180, leading to activation. Phosphorylation at Thr-117 and Thr-384 by PKB/AKT1, leads to inhibition of its: cleavage, kinase activity, autophosphorylation at Thr-180, binding to RASSF1 and nuclear translocation, and increase in its binding to RAF1. Phosphorylated at Ser-15 by PLK1, leading to activation. In terms of processing, proteolytically cleaved by caspase-3 during apoptosis. Proteolytic cleavage results in kinase activation and nuclear translocation of the truncated form (MST1/N). Ubiquitinated by TRIM69; leading to its redistribution to the perinuclear cytoskeleton.

Its subcellular location is the cytoplasm. It is found in the nucleus. The enzyme catalyses L-seryl-[protein] + ATP = O-phospho-L-seryl-[protein] + ADP + H(+). It carries out the reaction L-threonyl-[protein] + ATP = O-phospho-L-threonyl-[protein] + ADP + H(+). Its activity is regulated as follows. Inhibited by the C-terminal non-catalytic region. Activated by caspase-cleavage. Full activation also requires homodimerization and autophosphorylation of Thr-180, which are inhibited by the proto-oncogene product RAF1. Activated by RASSF1 which acts by preventing its dephosphorylation. When autophosphorylated at Thr-180, recruits STRIPAK complex and promotes PP2A-mediated dephosphorylation and inactivation of STK3. Functionally, stress-activated, pro-apoptotic kinase which, following caspase-cleavage, enters the nucleus and induces chromatin condensation followed by internucleosomal DNA fragmentation. Key component of the Hippo signaling pathway which plays a pivotal role in organ size control and tumor suppression by restricting proliferation and promoting apoptosis. The core of this pathway is composed of a kinase cascade wherein STK3/MST2 and STK4/MST1, in complex with its regulatory protein SAV1, phosphorylates and activates LATS1/2 in complex with its regulatory protein MOB1, which in turn phosphorylates and inactivates YAP1 oncoprotein and WWTR1/TAZ. Phosphorylation of YAP1 by LATS2 inhibits its translocation into the nucleus to regulate cellular genes important for cell proliferation, cell death, and cell migration. STK3/MST2 and STK4/MST1 are required to repress proliferation of mature hepatocytes, to prevent activation of facultative adult liver stem cells (oval cells), and to inhibit tumor formation. Phosphorylates NKX2-1. Phosphorylates NEK2 and plays a role in centrosome disjunction by regulating the localization of NEK2 to centrosomes, and its ability to phosphorylate CROCC and CEP250. In conjunction with SAV1, activates the transcriptional activity of ESR1 through the modulation of its phosphorylation. Positively regulates RAF1 activation via suppression of the inhibitory phosphorylation of RAF1 on 'Ser-259'. Phosphorylates MOBKL1A and RASSF2. Phosphorylates MOBKL1B on 'Thr-74'. Acts cooperatively with MOBKL1B to activate STK38. The protein is Serine/threonine-protein kinase 3 (Stk3) of Rattus norvegicus (Rat).